The primary structure comprises 310 residues: Tagatose-6-phosphate kinase (310 aa).

This sequence belongs to the carbohydrate kinase PfkB family. LacC subfamily.

The enzyme catalyses D-tagatofuranose 6-phosphate + ATP = D-tagatofuranose 1,6-bisphosphate + ADP + H(+). It functions in the pathway carbohydrate metabolism; D-tagatose 6-phosphate degradation; D-glyceraldehyde 3-phosphate and glycerone phosphate from D-tagatose 6-phosphate: step 1/2. In Staphylococcus aureus (strain MRSA252), this protein is Tagatose-6-phosphate kinase.